Here is a 313-residue protein sequence, read N- to C-terminus: WD repeat-containing protein 82-B (313 aa).

WD repeat units follow at residues 19-58 (ENSD…PKRT), 105-144 (GHSK…CQGL), 146-184 (HLQG…KGPF), 192-231 (DRTC…VMHT), 236-276 (NNSK…KVAV), and 280-313 (KHTG…TIDD).

Belongs to the WD repeat SWD2 family. As to quaternary structure, component of the SET1/COMPASS complex. Component of the PNUTS-PP1 phosphatase complex.

It is found in the nucleus. It localises to the chromosome. The protein localises to the cytoplasm. Its function is as follows. Regulatory component of the SET1/COMPASS complex implicated in the tethering of this complex to transcriptional start sites of active genes. Facilitates histone H3 'Lys-4' methylation (H3K4me) via recruitment of the SETD1A or SETD1B to the 'Ser-5' phosphorylated C-terminal domain (CTD) of RNA polymerase II large subunit (POLR2A). Component of the PNUTS-PP1 protein phosphatase complex, a protein phosphatase 1 (PP1) complex that promotes RNA polymerase II transcription pause-release, allowing transcription elongation. The sequence is that of WD repeat-containing protein 82-B (wdr82-b) from Xenopus laevis (African clawed frog).